Consider the following 701-residue polypeptide: C6 finger domain transcription factor nscR (701 aa).

A DNA-binding region (zn(2)-C6 fungal-type) is located at residues 17–43 (CELCRERKVKCDKLDPCTNCASAGVVC).

Its subcellular location is the nucleus. Its function is as follows. Transcription factor that specifically regulates the neosartoricin B biosynthesis gene cluster. The protein is C6 finger domain transcription factor nscR of Arthroderma gypseum (strain ATCC MYA-4604 / CBS 118893) (Microsporum gypseum).